We begin with the raw amino-acid sequence, 412 residues long: Imidazolonepropionase (412 aa).

2 residues coordinate Fe(3+): histidine 71 and histidine 73. Zn(2+)-binding residues include histidine 71 and histidine 73. Arginine 80, tyrosine 143, and histidine 176 together coordinate 4-imidazolone-5-propanoate. Tyrosine 143 serves as a coordination point for N-formimidoyl-L-glutamate. Residue histidine 241 participates in Fe(3+) binding. Residue histidine 241 coordinates Zn(2+). Glutamine 244 contributes to the 4-imidazolone-5-propanoate binding site. Aspartate 316 contributes to the Fe(3+) binding site. Zn(2+) is bound at residue aspartate 316. N-formimidoyl-L-glutamate contacts are provided by asparagine 318 and glycine 320. 4-imidazolone-5-propanoate is bound at residue threonine 321.

This sequence belongs to the metallo-dependent hydrolases superfamily. HutI family. Zn(2+) serves as cofactor. Fe(3+) is required as a cofactor.

The protein resides in the cytoplasm. The enzyme catalyses 4-imidazolone-5-propanoate + H2O = N-formimidoyl-L-glutamate. It participates in amino-acid degradation; L-histidine degradation into L-glutamate; N-formimidoyl-L-glutamate from L-histidine: step 3/3. Its function is as follows. Catalyzes the hydrolytic cleavage of the carbon-nitrogen bond in imidazolone-5-propanoate to yield N-formimidoyl-L-glutamate. It is the third step in the universal histidine degradation pathway. The sequence is that of Imidazolonepropionase from Aromatoleum aromaticum (strain DSM 19018 / LMG 30748 / EbN1) (Azoarcus sp. (strain EbN1)).